The following is a 244-amino-acid chain: Inactive chemokine-binding protein (244 aa).

Residues 1–79 are disordered; it reads MHVPASLQQS…STSVEDVDPP (79 aa). The segment covering 37 to 53 has biased composition (polar residues); it reads QDQTPTNDKICQSVTEI. The span at 54–77 shows a compositional bias: acidic residues; that stretch reads TESESDPDPEVESEDDSTSVEDVD.

The protein belongs to the orthopoxvirus OPG001 family.

Its subcellular location is the host cytoplasm. Its function is as follows. The protein is truncated in this vaccinal strain and presumably inactive, because the lack of signal peptide prevents the protein of being secreted. In the other strains inhibits host immune defense by binding to host chemokines. Binds host CC chemokines (beta chemokines) such as RANTES with high affinity, but not CXC or C chemokines (alpha and gamma chemokines). The sequence is that of Inactive chemokine-binding protein (OPG001) from Vaccinia virus (strain Copenhagen) (VACV).